The sequence spans 509 residues: Aspartyl/glutamyl-tRNA(Asn/Gln) amidotransferase subunit B (509 aa).

Belongs to the GatB/GatE family. GatB subfamily. In terms of assembly, heterotrimer of A, B and C subunits.

The enzyme catalyses L-glutamyl-tRNA(Gln) + L-glutamine + ATP + H2O = L-glutaminyl-tRNA(Gln) + L-glutamate + ADP + phosphate + H(+). The catalysed reaction is L-aspartyl-tRNA(Asn) + L-glutamine + ATP + H2O = L-asparaginyl-tRNA(Asn) + L-glutamate + ADP + phosphate + 2 H(+). Its function is as follows. Allows the formation of correctly charged Asn-tRNA(Asn) or Gln-tRNA(Gln) through the transamidation of misacylated Asp-tRNA(Asn) or Glu-tRNA(Gln) in organisms which lack either or both of asparaginyl-tRNA or glutaminyl-tRNA synthetases. The reaction takes place in the presence of glutamine and ATP through an activated phospho-Asp-tRNA(Asn) or phospho-Glu-tRNA(Gln). This is Aspartyl/glutamyl-tRNA(Asn/Gln) amidotransferase subunit B from Psychrobacter cryohalolentis (strain ATCC BAA-1226 / DSM 17306 / VKM B-2378 / K5).